A 124-amino-acid chain; its full sequence is Small ribosomal subunit protein uS12 (124 aa).

Residue Asp89 is modified to 3-methylthioaspartic acid. Residues 105 to 124 (AGVKDRKKGRSKYGAKRPKA) form a disordered region. A compositionally biased stretch (basic residues) spans 109 to 124 (DRKKGRSKYGAKRPKA).

It belongs to the universal ribosomal protein uS12 family. Part of the 30S ribosomal subunit. Contacts proteins S8 and S17. May interact with IF1 in the 30S initiation complex.

Its function is as follows. With S4 and S5 plays an important role in translational accuracy. Functionally, interacts with and stabilizes bases of the 16S rRNA that are involved in tRNA selection in the A site and with the mRNA backbone. Located at the interface of the 30S and 50S subunits, it traverses the body of the 30S subunit contacting proteins on the other side and probably holding the rRNA structure together. The combined cluster of proteins S8, S12 and S17 appears to hold together the shoulder and platform of the 30S subunit. In Dichelobacter nodosus (strain VCS1703A), this protein is Small ribosomal subunit protein uS12.